Here is a 343-residue protein sequence, read N- to C-terminus: Thymidine kinase (343 aa).

Residue G27–S34 participates in ATP binding. The active-site Proton acceptor is E56. Residues Y74 and Q98 each contribute to the substrate site. R188 contributes to the ATP binding site. Residue R194 coordinates substrate.

This sequence belongs to the herpesviridae thymidine kinase family. As to quaternary structure, homodimer.

It catalyses the reaction thymidine + ATP = dTMP + ADP + H(+). Functionally, catalyzes the transfer of the gamma-phospho group of ATP to thymidine to generate dTMP in the salvage pathway of pyrimidine synthesis. The dTMP serves as a substrate for DNA polymerase during viral DNA replication. Allows the virus to be reactivated and to grow in non-proliferative cells lacking a high concentration of phosphorylated nucleic acid precursors. This Felidae (cat family) protein is Thymidine kinase.